A 358-amino-acid chain; its full sequence is Na(+)/H(+) exchange regulatory cofactor NHE-RF1 (358 aa).

Ser2 is subject to N-acetylserine. Phosphoserine is present on residues Ser2 and Ser46. Positions Leu14–Asp94 constitute a PDZ 1 domain. Low complexity predominate over residues Gln114–Glu134. A disordered region spans residues Gln114–Arg151. Residues Asn135–Arg151 are compositionally biased toward basic and acidic residues. A PDZ 2 domain is found at Leu154–Glu234. Positions Ser247–Leu358 are disordered. Low complexity predominate over residues Leu272 to Ser290. Phosphoserine is present on residues Ser279, Ser289, and Ser290. At Thr292 the chain carries Phosphothreonine. 3 positions are modified to phosphoserine: Ser293, Ser298, and Ser301. Low complexity predominate over residues Thr308–Leu327. The span at Trp348–Leu358 shows a compositional bias: basic and acidic residues.

In terms of assembly, homodimer, and heterodimer with NHERF2. Binds the N-termini of EZR, RDX and MSN. Binds the C-termini of PDGFRA, PDGFRB, ADRB2, NOS2 and CFTR. Binds ARHGAP17, EPI64, RACK1, OPRK1, GNAQ, CTNNB1 and PLCB3. Binds PDZK1. Interacts with CLCN3. Binds the C-terminus of PAG1. In resting T-cells, part of a PAG1-NHERF1-MSN complex which is disrupted upon TCR activation. Forms a complex with CFTR and SLC4A7. Forms a complex with SLC4A7 and ATP6V1B1. Interacts with TRPC4 (via the PDZ-binding domain). Directly interacts with HTR4. Interacts (via the PDZ 1 domain) with PODXL (via the C-terminal PDZ-binding motif DTHL); interaction is not detected in glomerular epithelium cells. Interacts (via the PDZ 1 domain) with PODXL (via the C-terminal PDZ-binding motif DTHL); the interaction take place early in the secretory pathway and is necessary for its apical membrane sorting. Interacts with SLC26A3. Interacts with MCC. Interacts with SLC34A1. Interacts (via the PDZ domains) with SLC26A6 isoform 4 and isoform 5. Interacts (via PDZ domains) with ACE2 (via PDZ-binding motif); the interaction may enhance ACE2 membrane residence. In terms of processing, phosphorylated on serine residues. Detected in ileum, duodenum and in kidney, where it is found in the glomerulus, the proximal tubule, the thick ascending limb of Henle's loop and the cortical collecting duct.

The protein resides in the cytoplasm. The protein localises to the apical cell membrane. It is found in the cell projection. It localises to the filopodium. Its subcellular location is the ruffle. The protein resides in the microvillus. The protein localises to the endomembrane system. Scaffold protein that connects plasma membrane proteins with members of the ezrin/moesin/radixin family and thereby helps to link them to the actin cytoskeleton and to regulate their surface expression. Necessary for recycling of internalized ADRB2. Was first known to play a role in the regulation of the activity and subcellular location of SLC9A3. Necessary for cAMP-mediated phosphorylation and inhibition of SLC9A3. Involved in sperm capacitation. May participate in the regulation of the chloride and bicarbonate homeostasis in spermatozoa. May enhance Wnt signaling. May participate in HTR4 targeting to microvilli. Involved in the regulation of phosphate reabsorption in the renal proximal tubules. The protein is Na(+)/H(+) exchange regulatory cofactor NHE-RF1 (NHERF1) of Oryctolagus cuniculus (Rabbit).